Here is a 149-residue protein sequence, read N- to C-terminus: Aquaporin-like protein 2 (149 aa).

The interval 1–35 (MSNESNDLEKNISHLDPTGVDNAYIPPEQPETKHS) is disordered. At 1–47 (MSNESNDLEKNISHLDPTGVDNAYIPPEQPETKHSRFNIDRDTLRNH) the chain is on the cytoplasmic side. The helical transmembrane segment at 48-68 (FIAAVGEFCGTFMFLWCAYVI) threads the bilayer. Topologically, residues 69–89 (CNVANHDVALTTEPEGSHPGQ) are extracellular. Residues 90-110 (LIMIALGFGFSVMFSIWCFWW) traverse the membrane as a helical segment. At 111 to 149 (GFEPSRFSLFVFGQSHLSSQMCSDVVSSDHCWDGCWWCR) the chain is on the cytoplasmic side.

It belongs to the MIP/aquaporin (TC 1.A.8) family.

Its subcellular location is the endoplasmic reticulum membrane. It localises to the cell membrane. Water channel required to facilitate the transport of water across membranes. Involved in freeze tolerance, osmotolerance and cell flocculation in liquid cultures. Is non-functional in most laboratory strains. The chain is Aquaporin-like protein 2 (AQY2-2) from Saccharomyces cerevisiae (strain RM11-1a) (Baker's yeast).